A 414-amino-acid polypeptide reads, in one-letter code: Serine/threonine transporter SstT (414 aa).

8 consecutive transmembrane segments (helical) span residues 16 to 36 (GSLV…AWIS), 46 to 66 (LGTL…LMLV), 84 to 104 (ILFL…VFSF), 143 to 163 (ALLN…GFAL), 180 to 200 (AVTF…FGLV), 219 to 239 (LVVL…LLVF), 300 to 320 (MAGA…TLGV), and 332 to 352 (VVAS…LLLI).

It belongs to the dicarboxylate/amino acid:cation symporter (DAACS) (TC 2.A.23) family.

The protein resides in the cell inner membrane. It carries out the reaction L-serine(in) + Na(+)(in) = L-serine(out) + Na(+)(out). It catalyses the reaction L-threonine(in) + Na(+)(in) = L-threonine(out) + Na(+)(out). Involved in the import of serine and threonine into the cell, with the concomitant import of sodium (symport system). The sequence is that of Serine/threonine transporter SstT from Salmonella agona (strain SL483).